Reading from the N-terminus, the 84-residue chain is MQERDILLKIKEIAKAKNFKTELDESVLQKPFRELKIDSLDMFSVIVSLEKEFDIMFEDEKLMQLNNLAELIAEVKHLISQKGV.

Positions 4–79 (RDILLKIKEI…ELIAEVKHLI (76 aa)) constitute a Carrier domain. Ser39 bears the O-(pantetheine 4'-phosphoryl)serine mark.

In terms of processing, 4'-phosphopantetheine is transferred from CoA to a specific serine of the apo-ACP-like protein.

It participates in lipid metabolism; fatty acid biosynthesis. In terms of biological role, carrier of the growing fatty acid chain in fatty acid biosynthesis. This Mycoplasma pneumoniae (strain ATCC 29342 / M129 / Subtype 1) (Mycoplasmoides pneumoniae) protein is Acyl carrier protein homolog.